Here is a 314-residue protein sequence, read N- to C-terminus: Ferrochelatase (314 aa).

Fe cation contacts are provided by histidine 188 and glutamate 269.

It belongs to the ferrochelatase family.

It localises to the cytoplasm. It catalyses the reaction heme b + 2 H(+) = protoporphyrin IX + Fe(2+). It functions in the pathway porphyrin-containing compound metabolism; protoheme biosynthesis; protoheme from protoporphyrin-IX: step 1/1. Its function is as follows. Catalyzes the ferrous insertion into protoporphyrin IX. In Campylobacter fetus subsp. fetus (strain 82-40), this protein is Ferrochelatase.